Consider the following 1588-residue polypeptide: Paternally-expressed gene 3 protein (1588 aa).

The region spanning 46 to 128 (HQRFRNLIYV…TLLENYKEMY (83 aa)) is the SCAN box domain. Disordered regions lie at residues 128–230 (YQPE…ESYQ), 266–306 (DGHS…RRGI), and 319–349 (KFIK…MSDD). Residues 129-142 (QPEDDNNSDVTSDD) show a composition bias toward acidic residues. Composition is skewed to basic and acidic residues over residues 143–152 (DMTRNRRESS), 161–182 (SGDR…DRWS), 206–225 (FEMD…RSQD), and 295–306 (PEAKKSTHRRGI). 3 C2H2-type zinc fingers span residues 454 to 476 (YVCD…QIMH), 507 to 529 (FECK…RKIH), and 565 to 587 (YECR…QKIH). Basic and acidic residues predominate over residues 588-607 (FGDDKDNEREHERERERGET). Residues 588-610 (FGDDKDNEREHERERERGETFRP) form a disordered region. Residues 627–649 (YECKVCGETFLHSSSLKEHQKIH) form a C2H2-type 4 zinc finger. The tract at residues 838-930 (LVASKPPRSH…EFSVPSSNVR (93 aa)) is disordered. Basic and acidic residues predominate over residues 868 to 881 (LNDKRQKIPARENP). The segment at 969 to 991 (YECQECGECFAHSSDLTEHQKIH) adopts a C2H2-type 5 zinc-finger fold. Positions 1056 to 1104 (EKSHGEESQGENTDGEETHSEETHGQETIEDPVIQGSDMEDPQKDDPDD) are disordered. The span at 1071 to 1082 (EETHSEETHGQE) shows a compositional bias: basic and acidic residues. 5 C2H2-type zinc fingers span residues 1107-1129 (YECE…QKVH), 1163-1185 (YECP…QRIH), 1225-1247 (IRCL…MRLH), 1282-1304 (FECA…VTVH), and 1332-1354 (YECK…KELH). Residues 1393–1495 (EAAEPEVEAX…GIEDPEEGED (103 aa)) form a disordered region. The segment covering 1395–1415 (AEPEVEAXEPEVEAAEPEVEA) has biased composition (acidic residues). 7 repeat units span residues 1397 to 1403 (PEVEAXE), 1404 to 1410 (PEVEAAE), 1411 to 1417 (PEVEAAE), 1418 to 1422 (PNGEA), 1425 to 1429 (PDGEA), 1432 to 1436 (PIGEA), and 1439 to 1443 (PNGEA). Residues 1397-1417 (PEVEAXEPEVEAAEPEVEAAE) form a 3 X 7 AA repeat of P-E-V-E-A-A-E region. The 4 X 5 AA repeat of P-X-G-E-A stretch occupies residues 1418-1443 (PNGEAEGPDGEAAEPIGEAGQPNGEA). Acidic residues-rich tracts occupy residues 1449–1466 (DADE…ERAE) and 1475–1495 (PEGD…EGED). 2 consecutive C2H2-type zinc fingers follow at residues 1505–1527 (YDCH…LKTH) and 1564–1586 (FKCD…QNTH).

Belongs to the krueppel C2H2-type zinc-finger protein family. As to quaternary structure, homodimer. Interacts with SIAH1A and SIAH2. Interacts with TRAF2.

It is found in the nucleus. The protein localises to the cytoplasm. Functionally, induces apoptosis in cooperation with SIAH1A. Acts as a mediator between p53/TP53 and BAX in a neuronal death pathway that is activated by DNA damage. Acts synergistically with TRAF2 and inhibits TNF induced apoptosis through activation of NF-kappa-B. This Pan paniscus (Pygmy chimpanzee) protein is Paternally-expressed gene 3 protein (PEG3).